Consider the following 167-residue polypeptide: 16S rRNA aminocarboxypropyltransferase (167 aa).

T17, V62, L84, Y99, and S103 together coordinate S-adenosyl-L-methionine.

It belongs to the TDD superfamily. TSR3 family.

It is found in the cytoplasm. The catalysed reaction is an N(1)-methylpseudouridine in rRNA + S-adenosyl-L-methionine = N(1)-methyl-N(3)-[(3S)-3-amino-3-carboxypropyl]pseudouridine in rRNA + S-methyl-5'-thioadenosine + H(+). Functionally, aminocarboxypropyltransferase that catalyzes the aminocarboxypropyl transfer on pseudouridine corresponding to position 914 in M.jannaschii 16S rRNA. It constitutes the last step in biosynthesis of the hypermodified N1-methyl-N3-(3-amino-3-carboxypropyl) pseudouridine (m1acp3-Psi). The protein is 16S rRNA aminocarboxypropyltransferase of Sulfurisphaera tokodaii (strain DSM 16993 / JCM 10545 / NBRC 100140 / 7) (Sulfolobus tokodaii).